The primary structure comprises 103 residues: Putative protein YmfH (103 aa).

Residues methionine 1 to glycine 34 are disordered. Positions valine 10 to valine 20 are enriched in basic and acidic residues. The next 2 membrane-spanning stretches (helical) occupy residues methionine 42–phenylalanine 62 and glycine 73–glutamate 93.

The protein resides in the cell inner membrane. This is Putative protein YmfH (ymfH) from Escherichia coli (strain K12).